Reading from the N-terminus, the 129-residue chain is Aspartate 1-decarboxylase (129 aa).

Ser-25 serves as the catalytic Schiff-base intermediate with substrate; via pyruvic acid. Position 25 is a pyruvic acid (Ser) (Ser-25). Thr-57 is a substrate binding site. Catalysis depends on Tyr-58, which acts as the Proton donor. Gly-73–Ala-75 serves as a coordination point for substrate.

It belongs to the PanD family. In terms of assembly, heterooctamer of four alpha and four beta subunits. Pyruvate serves as cofactor. Is synthesized initially as an inactive proenzyme, which is activated by self-cleavage at a specific serine bond to produce a beta-subunit with a hydroxyl group at its C-terminus and an alpha-subunit with a pyruvoyl group at its N-terminus.

It is found in the cytoplasm. It carries out the reaction L-aspartate + H(+) = beta-alanine + CO2. Its pathway is cofactor biosynthesis; (R)-pantothenate biosynthesis; beta-alanine from L-aspartate: step 1/1. In terms of biological role, catalyzes the pyruvoyl-dependent decarboxylation of aspartate to produce beta-alanine. The chain is Aspartate 1-decarboxylase from Hydrogenovibrio crunogenus (strain DSM 25203 / XCL-2) (Thiomicrospira crunogena).